A 380-amino-acid chain; its full sequence is Tetratricopeptide repeat protein 19, mitochondrial (380 aa).

Residues 1-70 constitute a mitochondrion transit peptide; that stretch reads MFRLLSWSLG…AALAWFSRPA (70 aa). TPR repeat units follow at residues 136–169, 179–212, 237–270, 279–312, and 318–351; these read TYTY…LLGG, IEIS…LEEK, GMCL…SEEI, IVLM…ARQI, and HMVL…AKLK.

Belongs to the TTC19 family. In terms of assembly, binds to the mature mitochondrial complex III dimer, after the incorporation of the Rieske protein UQCRFS1. Interacts with UQCRC1 and UQCRFS1. Interacts with ZFYVE26 and CHMP4B. Post-translationally, proteolytically cleaved by PARL.

It is found in the mitochondrion inner membrane. Required for the preservation of the structural and functional integrity of mitochondrial respiratory complex III by allowing the physiological turnover of the Rieske protein UQCRFS1. Involved in the clearance of UQCRFS1 N-terminal fragments, which are produced upon incorporation of UQCRFS1 into the complex III and whose presence is detrimental for its catalytic activity. In Homo sapiens (Human), this protein is Tetratricopeptide repeat protein 19, mitochondrial (TTC19).